Reading from the N-terminus, the 104-residue chain is Cell division protein FtsL (104 aa).

The Cytoplasmic segment spans residues 1-20 (MSKPSLTLPRIVLHDLWQHK). Residues 21-43 (WILLLALLVLSNAVAVVYTSHVS) form a helical membrane-spanning segment. The Periplasmic portion of the chain corresponds to 44-104 (RKLTTEWDQL…PSEEIVVKVP (61 aa)).

It belongs to the FtsL family. Part of a complex composed of FtsB, FtsL and FtsQ.

Its subcellular location is the cell inner membrane. Functionally, essential cell division protein. May link together the upstream cell division proteins, which are predominantly cytoplasmic, with the downstream cell division proteins, which are predominantly periplasmic. The chain is Cell division protein FtsL from Shewanella oneidensis (strain ATCC 700550 / JCM 31522 / CIP 106686 / LMG 19005 / NCIMB 14063 / MR-1).